Here is a 275-residue protein sequence, read N- to C-terminus: Nurim (275 aa).

Residues 1–4 (MASV) lie on the Nuclear side of the membrane. Residues 5–32 (TFRDGFLCVSALITFVFVFVTGADFVRF) traverse the membrane as a helical segment. At 33–63 (VSFRAINHNLSGAAPLCRDSVPWSVALRDGV) the chain is on the perinuclear space side. Residues 64-85 (VQKAVAVDVLLLVVFSLQHSLL) traverse the membrane as a helical segment. Residues 86–102 (AWTPVKRVCQSVFGVLS) are Nuclear-facing. The chain crosses the membrane as a helical span at residues 103 to 119 (RSVYCFTTAAALQILMH). The Perinuclear space portion of the chain corresponds to 120-138 (YWRPVTSAPCLWSVSSAPW). A helical transmembrane segment spans residues 139–169 (EIWFPLICFIVHFLCWAIICSILLIFDYPEL). At 170–196 (LGIKQVYYECLGLGDPLLLKSERAQRL) the chain is on the nuclear side. The helical transmembrane segment at 197 to 215 (YSHLRHPVCVELLTVLWLL) threads the bilayer. The Perinuclear space segment spans residues 216–221 (PSFPLD). Residues 222–239 (RLLLAVFLTVYLILAHSL) traverse the membrane as a helical segment. Over 240 to 275 (DKQDCAYLRHQLRNKLQLFSTPLEGSEQTNDNNKLE) the chain is Nuclear.

The protein belongs to the nurim family.

Its subcellular location is the nucleus inner membrane. The chain is Nurim (nrm) from Danio rerio (Zebrafish).